The chain runs to 82 residues: UPF0335 protein pRhico085 (82 aa).

Belongs to the UPF0335 family.

The polypeptide is UPF0335 protein pRhico085 (Azospirillum brasilense).